Consider the following 439-residue polypeptide: Probable E3 ubiquitin-protein ligase makorin-1 (439 aa).

3 C3H1-type zinc fingers span residues 18–45 (WTKH…HDLS), 48–74 (KQTM…HTKP), and 163–190 (EMKK…HGDV). The disordered stretch occupies residues 73-118 (KPSKQDEVPSSKPSMPLTAAPLAGTPEPVSDGPGGTTGAQEKPQGS). The makorin-type Cys-His stretch occupies residues 191-218 (CDMCGLQVLHPSDTSQRSQHIRACIEAH). An RING-type zinc finger spans residues 236–290 (CGVCMEVVFEKTNPSERRFGILSNCCHCYCLKCIRKWRSAKQFESKIIKSCPECR). A C3H1-type 4 zinc finger spans residues 319–348 (GMGTKPCRYFDEGRGTCPFGANCFYKHAFP). Positions 352–371 (LEEPQPQRRQNGSNGRNRNT) are disordered. A compositionally biased stretch (low complexity) spans 358–368 (QRRQNGSNGRN).

The enzyme catalyses S-ubiquitinyl-[E2 ubiquitin-conjugating enzyme]-L-cysteine + [acceptor protein]-L-lysine = [E2 ubiquitin-conjugating enzyme]-L-cysteine + N(6)-ubiquitinyl-[acceptor protein]-L-lysine.. The protein operates within protein modification; protein ubiquitination. E3 ubiquitin ligase catalyzing the covalent attachment of ubiquitin moieties onto substrate proteins. The sequence is that of Probable E3 ubiquitin-protein ligase makorin-1 from Danio rerio (Zebrafish).